Here is a 401-residue protein sequence, read N- to C-terminus: Imidazolonepropionase (401 aa).

Positions 66 and 68 each coordinate Fe(3+). Zn(2+) is bound by residues His66 and His68. 4-imidazolone-5-propanoate contacts are provided by Arg75, Tyr138, and His171. Position 138 (Tyr138) interacts with N-formimidoyl-L-glutamate. His236 provides a ligand contact to Fe(3+). Residue His236 coordinates Zn(2+). Gln239 is a 4-imidazolone-5-propanoate binding site. Residue Asp311 participates in Fe(3+) binding. A Zn(2+)-binding site is contributed by Asp311. 2 residues coordinate N-formimidoyl-L-glutamate: Asn313 and Gly315. Thr316 is a binding site for 4-imidazolone-5-propanoate.

Belongs to the metallo-dependent hydrolases superfamily. HutI family. It depends on Zn(2+) as a cofactor. Requires Fe(3+) as cofactor.

It is found in the cytoplasm. The enzyme catalyses 4-imidazolone-5-propanoate + H2O = N-formimidoyl-L-glutamate. It participates in amino-acid degradation; L-histidine degradation into L-glutamate; N-formimidoyl-L-glutamate from L-histidine: step 3/3. In terms of biological role, catalyzes the hydrolytic cleavage of the carbon-nitrogen bond in imidazolone-5-propanoate to yield N-formimidoyl-L-glutamate. It is the third step in the universal histidine degradation pathway. In Pseudomonas syringae pv. tomato (strain ATCC BAA-871 / DC3000), this protein is Imidazolonepropionase.